Here is a 514-residue protein sequence, read N- to C-terminus: GMP synthase [glutamine-hydrolyzing] (514 aa).

In terms of domain architecture, Glutamine amidotransferase type-1 spans 9–199 (MILVLDFGGQ…LFEVCQCTGD (191 aa)). Residue Cys-86 is the Nucleophile of the active site. Catalysis depends on residues His-173 and Glu-175. One can recognise a GMPS ATP-PPase domain in the interval 200-389 (WSMENFIEIE…LGLSDEIVWR (190 aa)). Residue 227–233 (SGGVDSS) participates in ATP binding.

As to quaternary structure, homodimer.

It catalyses the reaction XMP + L-glutamine + ATP + H2O = GMP + L-glutamate + AMP + diphosphate + 2 H(+). Its pathway is purine metabolism; GMP biosynthesis; GMP from XMP (L-Gln route): step 1/1. Functionally, catalyzes the synthesis of GMP from XMP. This Exiguobacterium sibiricum (strain DSM 17290 / CCUG 55495 / CIP 109462 / JCM 13490 / 255-15) protein is GMP synthase [glutamine-hydrolyzing].